The sequence spans 502 residues: Glycerol kinase (502 aa).

Position 13 (Thr-13) interacts with ADP. The ATP site is built by Thr-13, Thr-14, and Ser-15. Residue Thr-13 coordinates sn-glycerol 3-phosphate. Arg-17 provides a ligand contact to ADP. 4 residues coordinate sn-glycerol 3-phosphate: Arg-83, Glu-84, Tyr-136, and Asp-246. Arg-83, Glu-84, Tyr-136, Asp-246, and Gln-247 together coordinate glycerol. The ADP site is built by Thr-268 and Gly-311. Positions 268, 311, 315, and 412 each coordinate ATP. ADP contacts are provided by Gly-412 and Asn-416.

Belongs to the FGGY kinase family.

The enzyme catalyses glycerol + ATP = sn-glycerol 3-phosphate + ADP + H(+). It participates in polyol metabolism; glycerol degradation via glycerol kinase pathway; sn-glycerol 3-phosphate from glycerol: step 1/1. Inhibited by fructose 1,6-bisphosphate (FBP). Its function is as follows. Key enzyme in the regulation of glycerol uptake and metabolism. Catalyzes the phosphorylation of glycerol to yield sn-glycerol 3-phosphate. This is Glycerol kinase from Francisella tularensis subsp. holarctica (strain FTNF002-00 / FTA).